The following is a 318-amino-acid chain: L-lactate dehydrogenase (318 aa).

Residues Val18, Asp39, Lys44, Tyr69, and 83 to 84 each bind NAD(+); that span reads GA. Positions 86 and 92 each coordinate substrate. NAD(+)-binding positions include Ser105, 122-124, and Ser147; that span reads VSN. 124-127 serves as a coordination point for substrate; it reads NPVD. 152 to 155 contributes to the substrate binding site; the sequence is DTSR. His179 serves as the catalytic Proton acceptor. Tyr225 is modified (phosphotyrosine). Thr234 contacts substrate.

This sequence belongs to the LDH/MDH superfamily. LDH family. In terms of assembly, homotetramer.

Its subcellular location is the cytoplasm. The enzyme catalyses (S)-lactate + NAD(+) = pyruvate + NADH + H(+). It participates in fermentation; pyruvate fermentation to lactate; (S)-lactate from pyruvate: step 1/1. Its function is as follows. Catalyzes the conversion of lactate to pyruvate. The chain is L-lactate dehydrogenase from Clostridium botulinum (strain Loch Maree / Type A3).